We begin with the raw amino-acid sequence, 290 residues long: 33 kDa chaperonin (290 aa).

2 disulfides stabilise this stretch: Cys-235-Cys-237 and Cys-268-Cys-271.

It belongs to the HSP33 family. Under oxidizing conditions two disulfide bonds are formed involving the reactive cysteines. Under reducing conditions zinc is bound to the reactive cysteines and the protein is inactive.

The protein localises to the cytoplasm. Functionally, redox regulated molecular chaperone. Protects both thermally unfolding and oxidatively damaged proteins from irreversible aggregation. Plays an important role in the bacterial defense system toward oxidative stress. The sequence is that of 33 kDa chaperonin from Streptococcus gordonii (strain Challis / ATCC 35105 / BCRC 15272 / CH1 / DL1 / V288).